The sequence spans 327 residues: Carboxylesterase 20 (327 aa).

The Involved in the stabilization of the negatively charged intermediate by the formation of the oxyanion hole signature appears at 87-89; the sequence is HGG. The active-site Nucleophile is the serine 166. Residues aspartate 272 and histidine 302 contribute to the active site.

This sequence belongs to the 'GDXG' lipolytic enzyme family. Expressed in roots, stems, flowers and siliques.

The enzyme catalyses a carboxylic ester + H2O = an alcohol + a carboxylate + H(+). Esterase activity measured in vitro with the synthetic substrate p-nitrophenyl acetate (pNPA) is inhibited by strigolactone. Functionally, carboxylesterase that possesses esterase activity in vitro with the synthetic substrate p-nitrophenyl acetate (pNPA). Binds strigolactones, but is not able to hydrolyze them. May be involved in the regulation of shoot branching. The chain is Carboxylesterase 20 from Arabidopsis thaliana (Mouse-ear cress).